A 193-amino-acid chain; its full sequence is Peptidyl-tRNA hydrolase (193 aa).

Residue tyrosine 17 coordinates tRNA. Histidine 22 functions as the Proton acceptor in the catalytic mechanism. TRNA is bound by residues tyrosine 68, asparagine 70, and asparagine 116.

It belongs to the PTH family. In terms of assembly, monomer.

The protein localises to the cytoplasm. The enzyme catalyses an N-acyl-L-alpha-aminoacyl-tRNA + H2O = an N-acyl-L-amino acid + a tRNA + H(+). Its function is as follows. Hydrolyzes ribosome-free peptidyl-tRNAs (with 1 or more amino acids incorporated), which drop off the ribosome during protein synthesis, or as a result of ribosome stalling. Catalyzes the release of premature peptidyl moieties from peptidyl-tRNA molecules trapped in stalled 50S ribosomal subunits, and thus maintains levels of free tRNAs and 50S ribosomes. The chain is Peptidyl-tRNA hydrolase from Acinetobacter baumannii (strain AB0057).